The primary structure comprises 1219 residues: MPKIVLNGVTVDFPFQPYKCQQEYMTKVLECLQQKVNGILESPTGTGKTLCLLCTTLAWREHLRDGISARKIAERAQGELFPDRALSSWGNAAAAAGDPIACYTDIPKIIYASRTHSQLTQVINELRNTSYRPKVCVLGSREQLCIHPEVKKQESNHLQIHLCRKKVASRSCHFYNNVEEKSLEQELASPILDIEDLVKSGSKHRVCPYYLSRNLKQQADIIFMPYNYLLDAKSRRAHNIDLKGTVVIFDEAHNVEKMCEESASFDLTPHDLASGLDVIDQVLEEQTKAAQQGEPHPEFSADSPSPGLNMELEDIAKLKMILLRLEGAIDAVELPGDDSGVTKPGSYIFELFAEAQITFQTKGCILDSLDQIIQHLAGRAGVFTNTAGLQKLADIIQIVFSVDPSEGSPGSPAGLGALQSYKVHIHPDAGHRRTAQRSDAWSTTAARKRGKVLSYWCFSPGHSMHELVRQGVRSLILTSGTLAPVSSFALEMQIPFPVCLENPHIIDKHQIWVGVVPRGPDGAQLSSAFDRRFSEECLSSLGKALGNIARVVPYGLLIFFPSYPVMEKSLEFWRARDLARKMEALKPLFVEPRSKGSFSETISAYYARVAAPGSTGATFLAVCRGKASEGLDFSDTNGRGVIVTGLPYPPRMDPRVVLKMQFLDEMKGQGGAGGQFLSGQEWYRQQASRAVNQAIGRVIRHRQDYGAVFLCDHRFAFADARAQLPSWVRPHVRVYDNFGHVIRDVAQFFRVAERTMPAPAPRATAPSVRGEDAVSEAKSPGPFFSTRKAKSLDLHVPSLKQRSSGSPAAGDPESSLCVEYEQEPVPARQRPRGLLAALEHSEQRAGSPGEEQAHSCSTLSLLSEKRPAEEPRGGRKKIRLVSHPEEPVAGAQTDRAKLFMVAVKQELSQANFATFTQALQDYKGSDDFAALAACLGPLFAEDPKKHNLLQGFYQFVRPHHKQQFEEVCIQLTGRGCGYRPEHSIPRRQRAQPVLDPTGRTAPDPKLTVSTAAAQQLDPQEHLNQGRPHLSPRPPPTGDPGSQPQWGSGVPRAGKQGQHAVSAYLADARRALGSAGCSQLLAALTAYKQDDDLDKVLAVLAALTTAKPEDFPLLHRFSMFVRPHHKQRFSQTCTDLTGRPYPGMEPPGPQEERLAVPPVLTHRAPQPGPSRSEKTGKTQSKISSFLRQRPAGTVGAGGEDAGPSQSSGPPHGPAASEWGL.

The Helicase ATP-binding domain occupies Asn-7 to His-296. Ser-42–Thr-49 contributes to the ATP binding site. [4Fe-4S] cluster is bound by residues Cys-145, Cys-163, Cys-172, and Cys-207. A Nuclear localization signal motif is present at residues Lys-151–Val-167. Residues Asp-250–His-253 carry the DEAH box motif. Disordered stretches follow at residues Thr-287–Pro-306, Pro-757–Thr-786, Glu-839–Lys-877, Arg-979–Lys-1005, Asp-1017–Lys-1054, Cys-1132–Glu-1151, and Leu-1159–Leu-1219. The segment covering Pro-757–Pro-766 has biased composition (low complexity). Positions Ser-863–Gly-873 are enriched in basic and acidic residues. A Nuclear localization signal motif is present at residues Pro-871 to Lys-877. Residues Lys-1176–Leu-1185 show a composition bias toward polar residues. The short motif at Gln-1178–Leu-1185 is the PIP-box element. The span at Ala-1200–Leu-1219 shows a compositional bias: low complexity.

Belongs to the helicase family. RAD3/XPD subfamily. As to quaternary structure, interacts with TERF1. Interacts (via PIP-box) with PCNA; the interaction is direct and essential for suppressing telomere fragility. Interacts with MMS19; the interaction mediates the association of RTEL1 with the cytosolic iron-sulfur protein assembly (CIA) complex.

The protein resides in the nucleus. The catalysed reaction is ATP + H2O = ADP + phosphate + H(+). Functionally, a probable ATP-dependent DNA helicase implicated in telomere-length regulation, DNA repair and the maintenance of genomic stability. Acts as an anti-recombinase to counteract toxic recombination and limit crossover during meiosis. Regulates meiotic recombination and crossover homeostasis by physically dissociating strand invasion events and thereby promotes noncrossover repair by meiotic synthesis dependent strand annealing (SDSA) as well as disassembly of D loop recombination intermediates. Also disassembles T loops and prevents telomere fragility by counteracting telomeric G4-DNA structures, which together ensure the dynamics and stability of the telomere. This is Regulator of telomere elongation helicase 1 from Homo sapiens (Human).